Here is a 275-residue protein sequence, read N- to C-terminus: N-acetyltransferase YodP (275 aa).

The N-acetyltransferase domain maps to 125-271 (FTMRKAETND…AEGLENMNIW (147 aa)).

The protein belongs to the acetyltransferase family.

The catalysed reaction is (3S)-3,6-diaminohexanoate + acetyl-CoA = (3S)-6-acetamido-3-aminohexanoate + CoA + H(+). Its function is as follows. In vitro, is able to catalyze the acetylation of beta-lysine to N6-acetyl-beta-lysine, an archaeal osmolyte produced by methanogenic archaea. Its physiological function has not yet been elucidated. This chain is N-acetyltransferase YodP (yodP), found in Bacillus subtilis (strain 168).